A 652-amino-acid chain; its full sequence is DNA ligase (652 aa).

NAD(+) is bound by residues 29–33, 78–79, and glutamate 107; these read DSDYD and SL. Catalysis depends on lysine 109, which acts as the N6-AMP-lysine intermediate. NAD(+) is bound by residues arginine 130, glutamate 164, lysine 278, and lysine 302. The Zn(2+) site is built by cysteine 395, cysteine 398, cysteine 413, and cysteine 418. Residues 577 to 652 enclose the BRCT domain; that stretch reads NSDAALFGLT…IEDEDWLRQL (76 aa).

It belongs to the NAD-dependent DNA ligase family. LigA subfamily. It depends on Mg(2+) as a cofactor. The cofactor is Mn(2+).

It catalyses the reaction NAD(+) + (deoxyribonucleotide)n-3'-hydroxyl + 5'-phospho-(deoxyribonucleotide)m = (deoxyribonucleotide)n+m + AMP + beta-nicotinamide D-nucleotide.. Its function is as follows. DNA ligase that catalyzes the formation of phosphodiester linkages between 5'-phosphoryl and 3'-hydroxyl groups in double-stranded DNA using NAD as a coenzyme and as the energy source for the reaction. It is essential for DNA replication and repair of damaged DNA. The sequence is that of DNA ligase from Streptococcus pyogenes serotype M12 (strain MGAS2096).